We begin with the raw amino-acid sequence, 782 residues long: MPPRPNKRQQREQEELESLGGPSHEGEVSSEDEVAKRSVKNIAGAGFAALLTPEEDGQDSGDAGSPQPTRKTKKKKKKGPAPPRSQTPVMTEPPQSSRTSPNIPVHPKNEKKATKKAKAREKKAGKDELDKALAELSVNEAEMRKFFGAKVVQANKSTSAGASGSSSRRKPGVLRSNLTHPQPSWWAAKQREGLSIRVLTESETEAKMERQKWDTNEEEKWWTVEYSKKYKSMTMAFMQTVMSGDPEGFWNLLGKLPWHADTLLQLSEVYRHREEYAQAMDFVDRALFTYERSFIGAFTFTSGLNRLDFDHVENRPFFLAIHRQATDLQRRGCVRTAFEFARLLYSLDPWNDPHGALFHLDFLALKAGMSQWLLDVFDLFAARKETEAGVRDSRLNPSLLPGWSYARALALRIDEDANKDGIHTASTSALIEAITSFPSVVPLLADKLDVSLPTSIRSHRNFRIETDSSSLSPSVAALHLLSHLYVQRSFSLWKDAAHCAWFSSTVTSTFSSVSSVLPTTDRHNQFLSLYSNPSPQYSAYRHIMVLEASYRRLFSFIPRHVLNAKSLACDPLPPPTTVTEYNQAFFAGTDDLFALRSRTRQERVADERRLERLIPDAAFRGQLQAFFEAHPNFAERFPGGIVQFAQIAGQLPEDVLEDMMLAEAMGGEGLQDGGMPGQMPGFADFMNEGVDERQEPLAGVDNAPIRLVDHRQENLDAGVGAGADEDDEVEDDDEDEDEEVAPMPVRVLRNLLGRFWGGNTVAEDSSDDEGDRPPPVDDGGVD.

Disordered regions lie at residues 1–37 (MPPR…VAKR), 49–128 (ALLT…GKDE), 156–180 (KSTS…NLTH), 717–745 (AGVG…PMPV), and 758–782 (GNTV…GGVD). Residues 70–79 (RKTKKKKKKG) are compositionally biased toward basic residues. A compositionally biased stretch (polar residues) spans 86 to 102 (QTPVMTEPPQSSRTSPN). Positions 157 to 166 (STSAGASGSS) are enriched in low complexity. Positions 723–740 (ADEDDEVEDDDEDEDEEV) are enriched in acidic residues.

The protein resides in the nucleus. Its pathway is secondary metabolite biosynthesis; terpenoid biosynthesis. Functionally, probable transcription factor; part of the gene cluster that mediates the biosynthesis of clavilactone A, a meroterpenoid that features a unique benzo-fused ten-membered carbocyclic ring unit with an alpha,beta-epoxy-gamma-lactone moiety, forming an intriguing 10/5/3 tricyclic nested skeleton. In Ampulloclitocybe clavipes (Club foot), this protein is Probable transcription factor claV.